The following is a 331-amino-acid chain: Glycerol-3-phosphate dehydrogenase [NAD(P)+] (331 aa).

NADPH is bound by residues W11, R30, and K105. Positions 105, 134, and 136 each coordinate sn-glycerol 3-phosphate. Residue A138 coordinates NADPH. Residues K189, D242, S252, R253, and N254 each coordinate sn-glycerol 3-phosphate. Residue K189 is the Proton acceptor of the active site. R253 lines the NADPH pocket. Positions 277 and 279 each coordinate NADPH.

It belongs to the NAD-dependent glycerol-3-phosphate dehydrogenase family.

The protein localises to the cytoplasm. It catalyses the reaction sn-glycerol 3-phosphate + NAD(+) = dihydroxyacetone phosphate + NADH + H(+). The catalysed reaction is sn-glycerol 3-phosphate + NADP(+) = dihydroxyacetone phosphate + NADPH + H(+). It functions in the pathway membrane lipid metabolism; glycerophospholipid metabolism. Its function is as follows. Catalyzes the reduction of the glycolytic intermediate dihydroxyacetone phosphate (DHAP) to sn-glycerol 3-phosphate (G3P), the key precursor for phospholipid synthesis. The polypeptide is Glycerol-3-phosphate dehydrogenase [NAD(P)+] (Herminiimonas arsenicoxydans).